The chain runs to 124 residues: Putative iron-sulfur cluster insertion protein ErpA (124 aa).

Iron-sulfur cluster contacts are provided by C49, C113, and C115.

It belongs to the HesB/IscA family. Homodimer. Iron-sulfur cluster is required as a cofactor.

Functionally, required for insertion of 4Fe-4S clusters. The chain is Putative iron-sulfur cluster insertion protein ErpA from Acidovorax sp. (strain JS42).